Reading from the N-terminus, the 408-residue chain is Imidazolonepropionase (408 aa).

Positions 73 and 75 each coordinate Fe(3+). Residues H73 and H75 each contribute to the Zn(2+) site. Residues R82, Y145, and H178 each coordinate 4-imidazolone-5-propanoate. Y145 contacts N-formimidoyl-L-glutamate. H243 contributes to the Fe(3+) binding site. A Zn(2+)-binding site is contributed by H243. Q246 provides a ligand contact to 4-imidazolone-5-propanoate. D318 contributes to the Fe(3+) binding site. D318 contacts Zn(2+). N320 and G322 together coordinate N-formimidoyl-L-glutamate. Position 323 (S323) interacts with 4-imidazolone-5-propanoate.

The protein belongs to the metallo-dependent hydrolases superfamily. HutI family. It depends on Zn(2+) as a cofactor. Requires Fe(3+) as cofactor.

Its subcellular location is the cytoplasm. The catalysed reaction is 4-imidazolone-5-propanoate + H2O = N-formimidoyl-L-glutamate. It participates in amino-acid degradation; L-histidine degradation into L-glutamate; N-formimidoyl-L-glutamate from L-histidine: step 3/3. Its function is as follows. Catalyzes the hydrolytic cleavage of the carbon-nitrogen bond in imidazolone-5-propanoate to yield N-formimidoyl-L-glutamate. It is the third step in the universal histidine degradation pathway. This Shewanella baltica (strain OS155 / ATCC BAA-1091) protein is Imidazolonepropionase.